Here is a 568-residue protein sequence, read N- to C-terminus: SLAIN motif-containing protein 1 (568 aa).

5 disordered regions span residues 1-22, 59-92, 139-162, 235-256, and 291-403; these read MMAE…SGPV, LLLL…TAAA, GGGP…SPPP, YTSR…STSE, and STSA…LRRS. Residues 21-56 adopt a coiled-coil conformation; that stretch reads PVVNAELEVKKLQELVRKLEKQNEQLRSRAASAAAA. Residues 62–74 show a composition bias toward pro residues; sequence LPPPPPAAPPPAG. Residues 75–92 are compositionally biased toward low complexity; it reads LQPLGPRSPPAATATAAA. The segment covering 139–149 has biased composition (gly residues); the sequence is GGGPEPGGAGT. A compositionally biased stretch (polar residues) spans 235 to 245; the sequence is YTSRGSPLSPQ. The residue at position 243 (serine 243) is a Phosphoserine. 2 stretches are compositionally biased toward low complexity: residues 246–255 and 291–307; these read SSIDSELSTS and STSA…SLSS. Positions 316-329 are enriched in acidic residues; that stretch reads QEYDQYSLEDEEEF. Positions 366–384 are enriched in low complexity; the sequence is SSQYFPSNNYQQQQYYSPQ. Residues 385–395 are compositionally biased toward polar residues; it reads AQTPDQQPNRT. Residues arginine 471 and arginine 543 each carry the asymmetric dimethylarginine modification.

It belongs to the SLAIN motif-containing family. As to quaternary structure, interacts with MAPRE1, MAPRE2, MAPRE3 and CKAP5. Interacts with ZDHHC17 (via ANK repeats). In terms of tissue distribution, expressed in embryonic stem cells. Expressed in brain.

It is found in the cytoplasm. The protein resides in the cytoskeleton. In terms of biological role, microtubule plus-end tracking protein that might be involved in the regulation of cytoplasmic microtubule dynamics, microtubule organization and microtubule elongation. The polypeptide is SLAIN motif-containing protein 1 (SLAIN1) (Homo sapiens (Human)).